Here is a 1756-residue protein sequence, read N- to C-terminus: Transposon Ty1-PR2 Gag-Pol polyprotein (1756 aa).

Composition is skewed to polar residues over residues Met-1 to Pro-10, Thr-48 to Ser-60, and Gln-127 to Phe-152. 3 disordered regions span residues Met-1–Gln-93, Pro-126–Pro-173, and Gly-352–Thr-421. Positions Thr-153–Thr-165 are enriched in low complexity. Residues Asn-299 to His-401 are RNA-binding. Residues Asn-402–Ser-418 are compositionally biased toward low complexity. Catalysis depends on Asp-461, which acts as the For protease activity; shared with dimeric partner. The segment at Asn-583–Cys-640 is integrase-type zinc finger-like. In terms of domain architecture, Integrase catalytic spans Asn-660 to Pro-836. Mg(2+) is bound by residues Asp-671 and Asp-736. Disordered stretches follow at residues Ser-957–Lys-1088, Arg-1093–Pro-1112, and Asp-1131–Thr-1188. A compositionally biased stretch (low complexity) spans Ser-961 to Thr-970. The span at Ser-1006–Thr-1016 shows a compositional bias: polar residues. The segment covering Glu-1039 to Ser-1054 has biased composition (basic and acidic residues). 2 stretches are compositionally biased toward polar residues: residues Tyr-1055–Asp-1083 and Pro-1102–Pro-1112. The Bipartite nuclear localization signal motif lies at Lys-1179–Arg-1213. Residues Asn-1339–Gln-1477 form the Reverse transcriptase Ty1/copia-type domain. Residues Asp-1347, Asp-1428, Asp-1429, Asp-1611, Glu-1653, and Asp-1686 each coordinate Mg(2+). The region spanning Asp-1611–Lys-1753 is the RNase H Ty1/copia-type domain.

The capsid protein forms a homotrimer, from which the VLPs are assembled. The protease is a homodimer, whose active site consists of two apposed aspartic acid residues. Post-translationally, initially, virus-like particles (VLPs) are composed of the structural unprocessed proteins Gag and Gag-Pol, and also contain the host initiator methionine tRNA (tRNA(i)-Met) which serves as a primer for minus-strand DNA synthesis, and a dimer of genomic Ty RNA. Processing of the polyproteins occurs within the particle and proceeds by an ordered pathway, called maturation. First, the protease (PR) is released by autocatalytic cleavage of the Gag-Pol polyprotein yielding capsid protein p45 and a Pol-p154 precursor protein. This cleavage is a prerequisite for subsequent processing of Pol-p154 at the remaining sites to release the mature structural and catalytic proteins. Maturation takes place prior to the RT reaction and is required to produce transposition-competent VLPs.

It localises to the cytoplasm. Its subcellular location is the nucleus. The catalysed reaction is DNA(n) + a 2'-deoxyribonucleoside 5'-triphosphate = DNA(n+1) + diphosphate. It catalyses the reaction Endonucleolytic cleavage to 5'-phosphomonoester.. Functionally, capsid protein (CA) is the structural component of the virus-like particle (VLP), forming the shell that encapsulates the retrotransposons dimeric RNA genome. The particles are assembled from trimer-clustered units and there are holes in the capsid shells that allow for the diffusion of macromolecules. CA also has nucleocapsid-like chaperone activity, promoting primer tRNA(i)-Met annealing to the multipartite primer-binding site (PBS), dimerization of Ty1 RNA and initiation of reverse transcription. The aspartyl protease (PR) mediates the proteolytic cleavages of the Gag and Gag-Pol polyproteins after assembly of the VLP. Its function is as follows. Reverse transcriptase/ribonuclease H (RT) is a multifunctional enzyme that catalyzes the conversion of the retro-elements RNA genome into dsDNA within the VLP. The enzyme displays a DNA polymerase activity that can copy either DNA or RNA templates, and a ribonuclease H (RNase H) activity that cleaves the RNA strand of RNA-DNA heteroduplexes during plus-strand synthesis and hydrolyzes RNA primers. The conversion leads to a linear dsDNA copy of the retrotransposon that includes long terminal repeats (LTRs) at both ends. In terms of biological role, integrase (IN) targets the VLP to the nucleus, where a subparticle preintegration complex (PIC) containing at least integrase and the newly synthesized dsDNA copy of the retrotransposon must transit the nuclear membrane. Once in the nucleus, integrase performs the integration of the dsDNA into the host genome. This is Transposon Ty1-PR2 Gag-Pol polyprotein (TY1B-PR2) from Saccharomyces cerevisiae (strain ATCC 204508 / S288c) (Baker's yeast).